We begin with the raw amino-acid sequence, 252 residues long: Octanoyltransferase (252 aa).

Positions M1 to A21 are enriched in low complexity. Residues M1–P22 are disordered. Positions P56–T237 constitute a BPL/LPL catalytic domain. Residues R96–H103, A168–G170, and G181–S183 each bind substrate. The active-site Acyl-thioester intermediate is C199.

Belongs to the LipB family.

The protein resides in the cytoplasm. The catalysed reaction is octanoyl-[ACP] + L-lysyl-[protein] = N(6)-octanoyl-L-lysyl-[protein] + holo-[ACP] + H(+). The protein operates within protein modification; protein lipoylation via endogenous pathway; protein N(6)-(lipoyl)lysine from octanoyl-[acyl-carrier-protein]: step 1/2. Functionally, catalyzes the transfer of endogenously produced octanoic acid from octanoyl-acyl-carrier-protein onto the lipoyl domains of lipoate-dependent enzymes. Lipoyl-ACP can also act as a substrate although octanoyl-ACP is likely to be the physiological substrate. This chain is Octanoyltransferase, found in Burkholderia pseudomallei (strain 668).